Consider the following 153-residue polypeptide: Ribosome maturation factor RimP (153 aa).

This sequence belongs to the RimP family.

The protein localises to the cytoplasm. Functionally, required for maturation of 30S ribosomal subunits. In Trichormus variabilis (strain ATCC 29413 / PCC 7937) (Anabaena variabilis), this protein is Ribosome maturation factor RimP.